The chain runs to 186 residues: UPF0398 protein LBUL_0921 (186 aa).

This sequence belongs to the UPF0398 family.

This is UPF0398 protein LBUL_0921 from Lactobacillus delbrueckii subsp. bulgaricus (strain ATCC BAA-365 / Lb-18).